We begin with the raw amino-acid sequence, 481 residues long: ATP synthase subunit beta (481 aa).

Position 160–167 (160–167 (GGAGVGKT)) interacts with ATP.

This sequence belongs to the ATPase alpha/beta chains family. F-type ATPases have 2 components, CF(1) - the catalytic core - and CF(0) - the membrane proton channel. CF(1) has five subunits: alpha(3), beta(3), gamma(1), delta(1), epsilon(1). CF(0) has three main subunits: a(1), b(2) and c(9-12). The alpha and beta chains form an alternating ring which encloses part of the gamma chain. CF(1) is attached to CF(0) by a central stalk formed by the gamma and epsilon chains, while a peripheral stalk is formed by the delta and b chains.

It is found in the cell inner membrane. The enzyme catalyses ATP + H2O + 4 H(+)(in) = ADP + phosphate + 5 H(+)(out). In terms of biological role, produces ATP from ADP in the presence of a proton gradient across the membrane. The catalytic sites are hosted primarily by the beta subunits. In Anaeromyxobacter sp. (strain Fw109-5), this protein is ATP synthase subunit beta.